A 190-amino-acid polypeptide reads, in one-letter code: Elongation factor P (190 aa).

Residue lysine 34 is modified to N6-(3,6-diaminohexanoyl)-5-hydroxylysine.

Belongs to the elongation factor P family. In terms of processing, may be beta-lysylated on the epsilon-amino group of Lys-34 by the combined action of EpmA and EpmB, and then hydroxylated on the C5 position of the same residue by EpmC (if this protein is present). Lysylation is critical for the stimulatory effect of EF-P on peptide-bond formation. The lysylation moiety may extend toward the peptidyltransferase center and stabilize the terminal 3-CCA end of the tRNA. Hydroxylation of the C5 position on Lys-34 may allow additional potential stabilizing hydrogen-bond interactions with the P-tRNA.

The protein resides in the cytoplasm. It participates in protein biosynthesis; polypeptide chain elongation. In terms of biological role, involved in peptide bond synthesis. Alleviates ribosome stalling that occurs when 3 or more consecutive Pro residues or the sequence PPG is present in a protein, possibly by augmenting the peptidyl transferase activity of the ribosome. Modification of Lys-34 is required for alleviation. The chain is Elongation factor P from Psychrobacter arcticus (strain DSM 17307 / VKM B-2377 / 273-4).